The chain runs to 336 residues: Holliday junction branch migration complex subunit RuvB (336 aa).

Residues 1 to 183 (MATERLVAGN…FGINSRLEFY (183 aa)) are large ATPase domain (RuvB-L). ATP is bound by residues leucine 22, arginine 23, glycine 64, lysine 67, threonine 68, threonine 69, 130-132 (EDF), arginine 173, tyrosine 183, and arginine 220. Residue threonine 68 participates in Mg(2+) binding. The interval 184–254 (QVAELEEIIR…VAREALELLQ (71 aa)) is small ATPAse domain (RuvB-S). A head domain (RuvB-H) region spans residues 257–336 (AAGLDSSDRR…LGIKPEDRLF (80 aa)). 2 residues coordinate DNA: arginine 312 and arginine 317.

It belongs to the RuvB family. As to quaternary structure, homohexamer. Forms an RuvA(8)-RuvB(12)-Holliday junction (HJ) complex. HJ DNA is sandwiched between 2 RuvA tetramers; dsDNA enters through RuvA and exits via RuvB. An RuvB hexamer assembles on each DNA strand where it exits the tetramer. Each RuvB hexamer is contacted by two RuvA subunits (via domain III) on 2 adjacent RuvB subunits; this complex drives branch migration. In the full resolvosome a probable DNA-RuvA(4)-RuvB(12)-RuvC(2) complex forms which resolves the HJ.

It localises to the cytoplasm. It carries out the reaction ATP + H2O = ADP + phosphate + H(+). Functionally, the RuvA-RuvB-RuvC complex processes Holliday junction (HJ) DNA during genetic recombination and DNA repair, while the RuvA-RuvB complex plays an important role in the rescue of blocked DNA replication forks via replication fork reversal (RFR). RuvA specifically binds to HJ cruciform DNA, conferring on it an open structure. The RuvB hexamer acts as an ATP-dependent pump, pulling dsDNA into and through the RuvAB complex. RuvB forms 2 homohexamers on either side of HJ DNA bound by 1 or 2 RuvA tetramers; 4 subunits per hexamer contact DNA at a time. Coordinated motions by a converter formed by DNA-disengaged RuvB subunits stimulates ATP hydrolysis and nucleotide exchange. Immobilization of the converter enables RuvB to convert the ATP-contained energy into a lever motion, pulling 2 nucleotides of DNA out of the RuvA tetramer per ATP hydrolyzed, thus driving DNA branch migration. The RuvB motors rotate together with the DNA substrate, which together with the progressing nucleotide cycle form the mechanistic basis for DNA recombination by continuous HJ branch migration. Branch migration allows RuvC to scan DNA until it finds its consensus sequence, where it cleaves and resolves cruciform DNA. The polypeptide is Holliday junction branch migration complex subunit RuvB (Moorella thermoacetica (strain ATCC 39073 / JCM 9320)).